The chain runs to 102 residues: ATP-dependent Clp protease adapter protein ClpS (102 aa).

It belongs to the ClpS family. In terms of assembly, binds to the N-terminal domain of the chaperone ClpA.

Functionally, involved in the modulation of the specificity of the ClpAP-mediated ATP-dependent protein degradation. This chain is ATP-dependent Clp protease adapter protein ClpS, found in Shewanella sp. (strain ANA-3).